The primary structure comprises 839 residues: Probable alpha-glucuronidase A (839 aa).

An N-terminal signal peptide occupies residues 1–18; it reads MRWSFLTVLLWLVSLTGA. 12 N-linked (GlcNAc...) asparagine glycosylation sites follow: Asn49, Asn101, Asn148, Asn221, Asn278, Asn309, Asn342, Asn464, Asn526, Asn575, Asn681, and Asn731.

It belongs to the glycosyl hydrolase 67 family.

Its subcellular location is the secreted. The catalysed reaction is an alpha-D-glucuronoside + H2O = D-glucuronate + an alcohol. Its function is as follows. Alpha-glucuronidase involved in the hydrolysis of xylan, a major structural heterogeneous polysaccharide found in plant biomass representing the second most abundant polysaccharide in the biosphere, after cellulose. Releases 4-O-methylglucuronic acid from xylan. The polypeptide is Probable alpha-glucuronidase A (aguA) (Aspergillus flavus (strain ATCC 200026 / FGSC A1120 / IAM 13836 / NRRL 3357 / JCM 12722 / SRRC 167)).